The sequence spans 176 residues: Dual-action ribosomal maturation protein DarP (176 aa).

Positions M1–I10 are enriched in polar residues. Residues M1–T22 form a disordered region.

The protein belongs to the DarP family.

The protein localises to the cytoplasm. In terms of biological role, member of a network of 50S ribosomal subunit biogenesis factors which assembles along the 30S-50S interface, preventing incorrect 23S rRNA structures from forming. Promotes peptidyl transferase center (PTC) maturation. In Nitrosomonas eutropha (strain DSM 101675 / C91 / Nm57), this protein is Dual-action ribosomal maturation protein DarP.